The following is a 746-amino-acid chain: Eukaryotic translation initiation factor 3 subunit B (746 aa).

Residues 1–11 (MAPSYEHLREA) show a composition bias toward basic and acidic residues. The segment at 1-20 (MAPSYEHLREADLDEDEFDE) is disordered. The region spanning 42 to 128 (TFVVIDGLPE…HTLRVNKLMD (87 aa)) is the RRM domain. WD repeat units lie at residues 195–234 (DRPNWTESFVQWSPLGTYLLSMHMQGVQLWGGPKWDRLGR), 247–294 (PQEN…RSFA), 307–346 (PRKHPWPAFKWSSDDKYVARLTQGQSISVYELPRMNLLDK), 349–386 (IKVEGVQDFEWAPSRPQRDGVKTYEQMFCYWTPEIGSN), 458–500 (TIKD…FFCP), 517–560 (LDKR…EKPE), and 575–620 (ADHY…LREE).

The protein belongs to the eIF-3 subunit B family. In terms of assembly, component of the eukaryotic translation initiation factor 3 (eIF-3) complex.

It localises to the cytoplasm. In terms of biological role, RNA-binding component of the eukaryotic translation initiation factor 3 (eIF-3) complex, which is involved in protein synthesis of a specialized repertoire of mRNAs and, together with other initiation factors, stimulates binding of mRNA and methionyl-tRNAi to the 40S ribosome. The eIF-3 complex specifically targets and initiates translation of a subset of mRNAs involved in cell proliferation. This Pyricularia oryzae (strain 70-15 / ATCC MYA-4617 / FGSC 8958) (Rice blast fungus) protein is Eukaryotic translation initiation factor 3 subunit B.